The following is a 258-amino-acid chain: Regulatory protein RecX (258 aa).

This sequence belongs to the RecX family.

Its subcellular location is the cytoplasm. Modulates RecA activity. The protein is Regulatory protein RecX of Streptococcus equi subsp. equi (strain 4047).